Consider the following 448-residue polypeptide: Tryptophan dimethylallyltransferase 1 (448 aa).

L-tryptophan-binding positions include 80-81 and Glu89; that span reads IL. Substrate contacts are provided by Arg100, Lys186, and Tyr188. Residues Tyr190 and Arg251 each coordinate L-tryptophan. The substrate site is built by Arg264, Lys266, Tyr268, Gln350, Tyr352, Tyr416, and Tyr420.

Belongs to the tryptophan dimethylallyltransferase family. In terms of assembly, homodimer.

The enzyme catalyses L-tryptophan + dimethylallyl diphosphate = 4-(3-methylbut-2-enyl)-L-tryptophan + diphosphate. Its pathway is alkaloid biosynthesis; ergot alkaloid biosynthesis. In terms of biological role, catalyzes the first step of ergot alkaloid biosynthesis. Ergot alkaloids, which are produced by endophyte fungi, can enhance plant host fitness, but also cause livestock toxicosis to host plants. The chain is Tryptophan dimethylallyltransferase 1 (dmaW1) from Epichloe coenophiala (Tall fescue endophyte fungus).